Here is a 564-residue protein sequence, read N- to C-terminus: MFS-type transporter kojT (564 aa).

N-linked (GlcNAc...) asparagine glycosylation is present at Asn-113. The next 12 membrane-spanning stretches (helical) occupy residues 120–140, 159–179, 187–207, 217–237, 249–269, 278–298, 353–373, 389–409, 437–457, 462–482, 500–520, and 530–550; these read WATL…SSID, SLAT…AAPF, PVYI…GLAP, FLAG…MADI, VCCT…AFIG, WTEW…FLFV, IMVA…FGFL, GSVG…FAMV, LWFA…MGWT, ISYW…QGIF, ALVS…IVSI, and WSLT…YIFY.

Belongs to the major facilitator superfamily.

The protein resides in the cell membrane. Its function is as follows. MFS-type transporter; part of the gene cluster that mediates the biosynthesis of 5-hydroxy-2-hydroxymethyl-1,4-pyrone, also know as kojic acid, a by-product in the fermentation process of malting rice that acts as a chelation agent. Involved in the seretion of kojic acid. The chain is MFS-type transporter kojT from Aspergillus flavus (strain ATCC 200026 / FGSC A1120 / IAM 13836 / NRRL 3357 / JCM 12722 / SRRC 167).